A 698-amino-acid chain; its full sequence is Quillaic acid 3-O-glycosyltransferase CSL1 (698 aa).

The chain crosses the membrane as a helical span at residues 14–34 (ALLSRLHILFHSALVASVFYY). Asn38 is a glycosylation site (N-linked (GlcNAc...) asparagine). A helical transmembrane segment spans residues 42–62 (GPAWALMTFAELTLAFIWALT). UDP-alpha-D-glucose-binding residues include Lys99 and Glu100. Asp129 is a catalytic residue. Asn317 is a glycosylation site (N-linked (GlcNAc...) asparagine). Ser436 is an active-site residue. A run of 6 helical transmembrane segments spans residues 478 to 498 (WTSGLIGVGISKFSPFTYAMS), 508 to 528 (YAYFAFSGLFAVFFLIYGVVL), 546 to 566 (WLLAFAGVFISSLLQHLYEVL), 581 to 601 (IWIIKSITACLFGLLDAMLNK), 636 to 656 (MFMVPLMILVVFNLVSFFGGL), and 669 to 689 (FAQLFLSLFILALSYPIMEEI).

Belongs to the glycosyltransferase 2 family. Plant cellulose synthase-like G subfamily. Mainly expressed in flowers and flower buds and, to a lesser extent, in leaves, stems and roots.

The protein localises to the golgi apparatus membrane. The protein operates within secondary metabolite biosynthesis; terpenoid biosynthesis. Its function is as follows. Component of the oleanane-type triterpene saponins (e.g. saponarioside A and saponarioside B) biosynthetic pathway, leading to the production of natural products with detergent properties used as traditional sources of soap. Glycosyltransferase that mediates the conversion of quillaic acid (QA) to QA-mono via the initiation of the C-3 sugar chain. In Saponaria officinalis (Common soapwort), this protein is Quillaic acid 3-O-glycosyltransferase CSL1.